The sequence spans 482 residues: tRNA sulfurtransferase (482 aa).

The 105-residue stretch at 61–165 (AAIVAELTRI…DERLILVTAR (105 aa)) folds into the THUMP domain. Residues 183–184 (LI), lysine 265, glycine 287, and glutamine 296 each bind ATP. Cysteine 344 and cysteine 456 are joined by a disulfide. The Rhodanese domain occupies 404–482 (FSHNDVILDI…GFKNVKVYRP (79 aa)). Catalysis depends on cysteine 456, which acts as the Cysteine persulfide intermediate.

The protein belongs to the ThiI family.

It localises to the cytoplasm. It catalyses the reaction [ThiI sulfur-carrier protein]-S-sulfanyl-L-cysteine + a uridine in tRNA + 2 reduced [2Fe-2S]-[ferredoxin] + ATP + H(+) = [ThiI sulfur-carrier protein]-L-cysteine + a 4-thiouridine in tRNA + 2 oxidized [2Fe-2S]-[ferredoxin] + AMP + diphosphate. It carries out the reaction [ThiS sulfur-carrier protein]-C-terminal Gly-Gly-AMP + S-sulfanyl-L-cysteinyl-[cysteine desulfurase] + AH2 = [ThiS sulfur-carrier protein]-C-terminal-Gly-aminoethanethioate + L-cysteinyl-[cysteine desulfurase] + A + AMP + 2 H(+). It functions in the pathway cofactor biosynthesis; thiamine diphosphate biosynthesis. Functionally, catalyzes the ATP-dependent transfer of a sulfur to tRNA to produce 4-thiouridine in position 8 of tRNAs, which functions as a near-UV photosensor. Also catalyzes the transfer of sulfur to the sulfur carrier protein ThiS, forming ThiS-thiocarboxylate. This is a step in the synthesis of thiazole, in the thiamine biosynthesis pathway. The sulfur is donated as persulfide by IscS. This is tRNA sulfurtransferase from Erwinia tasmaniensis (strain DSM 17950 / CFBP 7177 / CIP 109463 / NCPPB 4357 / Et1/99).